The chain runs to 150 residues: SsrA-binding protein (150 aa).

Belongs to the SmpB family.

The protein localises to the cytoplasm. In terms of biological role, required for rescue of stalled ribosomes mediated by trans-translation. Binds to transfer-messenger RNA (tmRNA), required for stable association of tmRNA with ribosomes. tmRNA and SmpB together mimic tRNA shape, replacing the anticodon stem-loop with SmpB. tmRNA is encoded by the ssrA gene; the 2 termini fold to resemble tRNA(Ala) and it encodes a 'tag peptide', a short internal open reading frame. During trans-translation Ala-aminoacylated tmRNA acts like a tRNA, entering the A-site of stalled ribosomes, displacing the stalled mRNA. The ribosome then switches to translate the ORF on the tmRNA; the nascent peptide is terminated with the 'tag peptide' encoded by the tmRNA and targeted for degradation. The ribosome is freed to recommence translation, which seems to be the essential function of trans-translation. In Chlamydia caviae (strain ATCC VR-813 / DSM 19441 / 03DC25 / GPIC) (Chlamydophila caviae), this protein is SsrA-binding protein.